Reading from the N-terminus, the 569-residue chain is 2-isopropylmalate synthase (569 aa).

One can recognise a Pyruvate carboxyltransferase domain in the interval 31–305; the sequence is PRWMSTDLRD…APELDFSDID (275 aa). Mg(2+) contacts are provided by Asp-40, His-244, His-246, and Asn-280. A regulatory domain region spans residues 437 to 569; the sequence is RETPLRYVSH…TASASAATEA (133 aa).

The protein belongs to the alpha-IPM synthase/homocitrate synthase family. LeuA type 2 subfamily. As to quaternary structure, homodimer. The cofactor is Mg(2+).

It is found in the cytoplasm. It carries out the reaction 3-methyl-2-oxobutanoate + acetyl-CoA + H2O = (2S)-2-isopropylmalate + CoA + H(+). It participates in amino-acid biosynthesis; L-leucine biosynthesis; L-leucine from 3-methyl-2-oxobutanoate: step 1/4. Functionally, catalyzes the condensation of the acetyl group of acetyl-CoA with 3-methyl-2-oxobutanoate (2-ketoisovalerate) to form 3-carboxy-3-hydroxy-4-methylpentanoate (2-isopropylmalate). In Cupriavidus taiwanensis (strain DSM 17343 / BCRC 17206 / CCUG 44338 / CIP 107171 / LMG 19424 / R1) (Ralstonia taiwanensis (strain LMG 19424)), this protein is 2-isopropylmalate synthase.